Consider the following 2197-residue polypeptide: RNA1 polyprotein (2197 aa).

Over 621 to 1167 (GLTDVFGVPL…YDWVYANGGK (547 aa)) the chain is Cytoplasmic. Residues 766–933 (VKRLSDLHKR…EGVAYNPSDP (168 aa)) enclose the SF3 helicase domain. 796-803 (GGPRCGKS) is an ATP binding site. A helical transmembrane segment spans residues 1168-1188 (LLLVLAAVILILFFGSACIKL). Topologically, residues 1189 to 1212 (MQAIFCGAAGGTVSMAAVGKMTVQ) are lumenal. Asparagine 1228 carries an N-linked (GlcNAc...) asparagine; by host glycan. The region spanning 1243–1475 (LAEAQFNESH…MPRYISHASF (233 aa)) is the Peptidase C3 domain. Residues histidine 1283, glutamate 1331, and cysteine 1433 each act as for picornain 3C-like protease activity in the active site. Positions 1765–1888 (SVALNCDYSR…SIKPDTMKYF (124 aa)) constitute a RdRp catalytic domain.

Belongs to the nepoviruses RNA1 polyprotein family. Specific enzymatic cleavages by picornain 3C-like protease in vivo yield mature proteins. Picornain 3C-like protease is autocatalytically processed. NTB exists as NTB-VPg polyprotein as well as NTB mature protein. In terms of processing, VPg is uridylylated by the polymerase and is covalently linked to the 5'-end of genomic RNA. This uridylylated form acts as a nucleotide-peptide primer for the polymerase.

Its subcellular location is the host endoplasmic reticulum lumen. The protein localises to the host endoplasmic reticulum membrane. It carries out the reaction RNA(n) + a ribonucleoside 5'-triphosphate = RNA(n+1) + diphosphate. Picornain 3C-like protease is a thiol protease that cleaves at Gln-|-Gly or Gln-|-Ser sites in the P1 and P2 polyproteins. Its function is as follows. The VPg-NTB polyprotein may act as a membrane-anchor for the replication complex. This chain is RNA1 polyprotein, found in Tomato ringspot virus (isolate raspberry) (ToRSV).